Reading from the N-terminus, the 179-residue chain is Large ribosomal subunit protein uL6 (179 aa).

This sequence belongs to the universal ribosomal protein uL6 family. In terms of assembly, part of the 50S ribosomal subunit.

This protein binds to the 23S rRNA, and is important in its secondary structure. It is located near the subunit interface in the base of the L7/L12 stalk, and near the tRNA binding site of the peptidyltransferase center. The protein is Large ribosomal subunit protein uL6 of Rhodococcus erythropolis (strain PR4 / NBRC 100887).